A 160-amino-acid chain; its full sequence is MSGLPSSFDSKEASVDELPFLEKVKFHCKQQPLVPLGTLLTTGAVALAAQNVRTGNKKKAQVWFRWRVGLQAATLVALVAGSFIYGSSLKEKKSEEEKMREKAKMRELLWIQELERRDQETQYRRKRAELARQKMQENEAAVSRLQKELKDLESHIKNEK.

An HIG1 domain is found at 5–96; sequence PSSFDSKEAS…SSLKEKKSEE (92 aa). 2 helical membrane passes run 33–49 and 67–89; these read LVPLGTLLTTGAVALAA and RVGLQAATLVALVAGSFIYGSSL. The stretch at 88–160 forms a coiled coil; it reads SLKEKKSEEE…DLESHIKNEK (73 aa).

The protein belongs to the RCF1 family. In terms of assembly, associates with the respiratory chain complex III/complex IV supercomplex.

Its subcellular location is the mitochondrion membrane. In terms of biological role, cytochrome c oxidase subunit which plays a role in assembly of respiratory supercomplexes. The chain is Respiratory supercomplex factor 1, mitochondrial (RCF1) from Zygosaccharomyces rouxii (strain ATCC 2623 / CBS 732 / NBRC 1130 / NCYC 568 / NRRL Y-229).